The primary structure comprises 957 residues: Valine--tRNA ligase (957 aa).

A 'HIGH' region motif is present at residues 42–52 (PNVTGSLHMGH). A 'KMSKS' region motif is present at residues 554–558 (KMSKS). Lys-557 provides a ligand contact to ATP. The stretch at 890–956 (DKDAELARLA…LEAQQETIAA (67 aa)) forms a coiled coil.

The protein belongs to the class-I aminoacyl-tRNA synthetase family. ValS type 1 subfamily. In terms of assembly, monomer.

The protein resides in the cytoplasm. It catalyses the reaction tRNA(Val) + L-valine + ATP = L-valyl-tRNA(Val) + AMP + diphosphate. Catalyzes the attachment of valine to tRNA(Val). As ValRS can inadvertently accommodate and process structurally similar amino acids such as threonine, to avoid such errors, it has a 'posttransfer' editing activity that hydrolyzes mischarged Thr-tRNA(Val) in a tRNA-dependent manner. This Aliivibrio fischeri (strain ATCC 700601 / ES114) (Vibrio fischeri) protein is Valine--tRNA ligase.